We begin with the raw amino-acid sequence, 281 residues long: Inositol diphosphatase SIW14 (281 aa).

Residues 1-20 (MGLYQAKNDEGSDPKSSSKI) form a disordered region. Over residues 7 to 20 (KNDEGSDPKSSSKI) the composition is skewed to basic and acidic residues. Phosphoserine is present on S94. The 151-residue stretch at 121–271 (NFSHVVGEIY…YDDDEIKRIA (151 aa)) folds into the Tyrosine-protein phosphatase domain. The 1D-myo-inositol hexakisphosphate site is built by N189, I190, and H193. Catalysis depends on C214, which acts as the Phosphocysteine intermediate.

Belongs to the protein-tyrosine phosphatase family. Atypical dual-specificity phosphatase Siw14-like subfamily. As to quaternary structure, monomer.

The protein localises to the cytoplasm. The enzyme catalyses 5-diphospho-1D-myo-inositol 1,2,3,4,6-pentakisphosphate + H2O = 1D-myo-inositol hexakisphosphate + phosphate + H(+). It carries out the reaction 5-diphospho-1D-myo-inositol 1,3,4,6-tetrakisphosphate + H2O = 1D-myo-inositol 1,3,4,5,6-pentakisphosphate + phosphate + H(+). It catalyses the reaction 3,5-bis(diphospho)-1D-myo-inositol 1,2,4,6-tetrakisphosphate + H2O = 3-diphospho-1D-myo-inositol 1,2,4,5,6-pentakisphosphate + phosphate + 2 H(+). The catalysed reaction is 1,5-bis(diphospho)-1D-myo-inositol 2,3,4,6-tetrakisphosphate + H2O = 1-diphospho-1D-myo-inositol 2,3,4,5,6-pentakisphosphate + phosphate + 2 H(+). The enzyme catalyses 6-diphospho-1D-myo-inositol pentakisphosphate + H2O = 1D-myo-inositol hexakisphosphate + phosphate + H(+). Functionally, selectively cleaves the beta-phosphate at the 5-position of soluble inositol pyrophosphates. Converts 5-diphosphoinositol tetrakisphosphate (5-PP-InsP(4)) into inositol pentakisphosphate (InsP(5)), 5-diphosphoinositol pentakisphosphate (5-PP-IP(5) or 5-InsP(7)) into inositol hexakisphosphate (IP(6) or InsP(6)), and 1,5-bisdiphosphoinositol tetrakisphosphate (1,5-PP-IP(5) or InsP(8)) into 1-diphosphoinositol pentakisphosphate (1-PP-IP(5) or 1-InsP(7)). Also has activity on 1,5-bis-diphosphoinositol 2,3,4,6-tetrakisphosphate (1,5-InsP(8)) and 3,5-InsP(8). Modulates inositol pyrophosphate metabolism that may have an influence in stress response. Plays a role in actin filament organization and endocytosis. Functions as a prion suppressing factor possibly due to its phosphatase activity against inositol pyrophosphates, which are signal transduction molecules involved in prion propagation. The polypeptide is Inositol diphosphatase SIW14 (SIW14) (Saccharomyces cerevisiae (strain ATCC 204508 / S288c) (Baker's yeast)).